Here is a 1035-residue protein sequence, read N- to C-terminus: Cell-division control histidine kinase PdhS (1035 aa).

Residues 1-613 form an important for polar localization region; the sequence is MSGSYPFIDI…HADGSEEPVD (613 aa). The segment at 500–533 is disordered; it reads QGLANTRAESETPVSETSSIEPVEPTPPVKTRSE. Residues 614–1035 are interaction with DivK; that stretch reads AHLNAIAWRG…VFPPTRVLAD (422 aa). The PAS domain occupies 659-730; sequence HVEELKTILD…YLHGLSGNGV (72 aa). Positions 802 to 1031 constitute a Histidine kinase domain; the sequence is RISHEIRTPL…VVEIVFPPTR (230 aa). The residue at position 805 (histidine 805) is a Phosphohistidine; by autocatalysis.

As to quaternary structure, interacts with DivK.

It localises to the cytoplasm. It carries out the reaction ATP + protein L-histidine = ADP + protein N-phospho-L-histidine.. Functionally, functions as a polar differentiation marker. Essential protein that, by localizing in the old pole of dividing cells, controls cell division and maturation, probably through control of DivK phosphorylation status and cellular distribution, which in turn regulates CtrA, a transcriptional regulator of the minB operon. The asymmetrical localization of this protein is probably required for cells to enter a new division cycle. In Brucella ovis (strain ATCC 25840 / 63/290 / NCTC 10512), this protein is Cell-division control histidine kinase PdhS (pdhS).